Reading from the N-terminus, the 115-residue chain is Large ribosomal subunit protein bL19 (115 aa).

This sequence belongs to the bacterial ribosomal protein bL19 family.

In terms of biological role, this protein is located at the 30S-50S ribosomal subunit interface and may play a role in the structure and function of the aminoacyl-tRNA binding site. The sequence is that of Large ribosomal subunit protein bL19 from Citrobacter koseri (strain ATCC BAA-895 / CDC 4225-83 / SGSC4696).